The following is a 281-amino-acid chain: 2-dehydro-3-deoxyphosphooctonate aldolase (281 aa).

It belongs to the KdsA family.

The protein localises to the cytoplasm. It catalyses the reaction D-arabinose 5-phosphate + phosphoenolpyruvate + H2O = 3-deoxy-alpha-D-manno-2-octulosonate-8-phosphate + phosphate. It functions in the pathway carbohydrate biosynthesis; 3-deoxy-D-manno-octulosonate biosynthesis; 3-deoxy-D-manno-octulosonate from D-ribulose 5-phosphate: step 2/3. It participates in bacterial outer membrane biogenesis; lipopolysaccharide biosynthesis. The chain is 2-dehydro-3-deoxyphosphooctonate aldolase from Pseudomonas syringae pv. syringae (strain B728a).